We begin with the raw amino-acid sequence, 325 residues long: Cln5-like protein 2 (325 aa).

Positions 1–19 (MNKLIFIIICLGIVDKTIS) are cleaved as a signal peptide. N-linked (GlcNAc...) asparagine glycans are attached at residues Asn88, Asn117, Asn133, Asn163, Asn182, Asn189, Asn238, and Asn262.

This sequence belongs to the CLN5 family.

In Dictyostelium discoideum (Social amoeba), this protein is Cln5-like protein 2 (cln5lb).